Reading from the N-terminus, the 316-residue chain is Methionyl-tRNA formyltransferase (316 aa).

113–116 (SLLP) contacts (6S)-5,6,7,8-tetrahydrofolate.

This sequence belongs to the Fmt family.

It carries out the reaction L-methionyl-tRNA(fMet) + (6R)-10-formyltetrahydrofolate = N-formyl-L-methionyl-tRNA(fMet) + (6S)-5,6,7,8-tetrahydrofolate + H(+). Its function is as follows. Attaches a formyl group to the free amino group of methionyl-tRNA(fMet). The formyl group appears to play a dual role in the initiator identity of N-formylmethionyl-tRNA by promoting its recognition by IF2 and preventing the misappropriation of this tRNA by the elongation apparatus. This Proteus mirabilis (strain HI4320) protein is Methionyl-tRNA formyltransferase.